The primary structure comprises 82 residues: M-zodatoxin-Lt3b (82 aa).

The signal sequence occupies residues 1–22 (MKTYAVLLALVVAFVCIAESTG). Residues 23 to 61 (YPVEDLEDDELTELEAEALLEDLLEDLELEDLDYNEEAR) constitute a propeptide that is removed on maturation. The short motif at 58-61 (EEAR) is the Processing quadruplet motif element. A81 is subject to Alanine amide.

Post-translationally, cleavage of the propeptide depends on the processing quadruplet motif (XXXR, with at least one of X being E). In terms of tissue distribution, expressed by the venom gland.

It localises to the secreted. It has antimicrobial activity against Gram-positive bacteria (A.globiformis VKM Ac-1112 (MIC=0.7 uM), and B.subtilis VKM B-501 (MIC=2.9 uM)), Gram-negative bacteria (E.coli DH5-alpha (MIC=23 uM), E.coli MH1 (MIC=28 uM), and P.aeruginosa PAO1 (MIC&gt;45 uM)), and yeasts (P.pastoris GS115 (MIC=23 uM), and S.cerevisiae Y190 (MIC=23 uM)). Does not have hemolytic against rabbit erythrocytes. Causes paralysis, but is not lethal when injected into insect (M.domestica) larvae. The polypeptide is M-zodatoxin-Lt3b (Lachesana tarabaevi (Spider)).